The chain runs to 377 residues: Progesterone receptor (377 aa).

The tract at residues 1-15 (EASQSPQYSFESLPQ) is modulating, Pro-Rich. A DNA-binding region (nuclear receptor) is located at residues 16-90 (KICLICGDEA…AGMVLGGRKF (75 aa)). 2 consecutive NR C4-type zinc fingers follow at residues 18–38 (CLIC…CGSC) and 54–78 (CAGR…LRKC). At serine 127 the chain carries Phosphoserine. Positions 130-364 (QDLQLIPPLI…EFPEMMSEVI (235 aa)) constitute an NR LBD domain. The interval 138 to 377 (LINLLMSIEP…LPKILAGMVK (240 aa)) is AF2; mediates transcriptional activation.

Belongs to the nuclear hormone receptor family. NR3 subfamily. As to quaternary structure, interacts with CUEDC2, SMARD1 and with UNC45A. Interacts with PRMT2. Interacts with NCOA2 and NCOA1. Interacts with KLF9. Interacts with GTF2B. Palmitoylated by ZDHHC7 and ZDHHC21. Palmitoylation is required for plasma membrane targeting and for rapid intracellular signaling via ERK and AKT kinases and cAMP generation.

It is found in the nucleus. Functionally, the steroid hormones and their receptors are involved in the regulation of eukaryotic gene expression and affect cellular proliferation and differentiation in target tissues. Transcriptional activator of several progesteron-dependent promoters in a variety of cell types. Involved in activation of SRC-dependent MAPK signaling on hormone stimulation. This Ovis aries (Sheep) protein is Progesterone receptor (PGR).